The primary structure comprises 97 residues: MEALGMIETRGLVALIEASDAMVKAARVKLVGVKQIGGGLCTAMVRGDVAACKAATDAGAAAAQRIGELVSVHVIPRPHGDLEEVFPIGLKGDSSNL.

The BMC domain occupies 3 to 87; the sequence is ALGMIETRGL…PHGDLEEVFP (85 aa).

Belongs to the bacterial microcompartments protein family. As to quaternary structure, homohexamer with a central pore of up to 8.6 Angstroms diameter. The hexamers pack into a two-dimensional array. Interacts with EutQ.

The protein localises to the bacterial microcompartment. Its pathway is amine and polyamine degradation; ethanolamine degradation. In terms of biological role, probably a major component of the bacterial microcompartment (BMC) shell dedicated to ethanolamine degradation. Each homohexamer has a central pore with an opening of up to 8.6 Angstroms. A positively-charged funnel leads to the pore from each side of the hexamer. The pore probably allows metabolite passage into and out of the BMC. The protein is Bacterial microcompartment shell protein EutM (eutM) of Escherichia coli O6:H1 (strain CFT073 / ATCC 700928 / UPEC).